The following is a 607-amino-acid chain: Cyclic-di-GMP receptor FimW (607 aa).

The pilZ-like domain stretch occupies residues 323-492 (ERTFQRTQGQ…GGTQMGIEMI (170 aa)). Positions 324-328 (RTFQR) match the RXXXR motif motif. Positions 435–440 (NHSPGG) match the D/NXSXXG motif motif. Over residues 568-582 (SQFEYRSAEPVNTPS) the composition is skewed to polar residues. Positions 568 to 607 (SQFEYRSAEPVNTPSDKPVTAPVARPPAGEEDFDSLWKSL) are disordered.

Monomer in the absence of c-di-GMP. Forms dimers in the presence of c-di-GMP.

The protein localises to the cytoplasm. Its function is as follows. High-affinity cyclic-di-GMP binding protein that regulates type IV pili (T4P) elongation. Required for T4P-mediated surface attachment and walking motility during the early phases of surface colonization. Not required for twitching motility. Does not bind related nucleotides such as GMP, GDP, GTP or ATP. The polypeptide is Cyclic-di-GMP receptor FimW (Pseudomonas aeruginosa (strain ATCC 15692 / DSM 22644 / CIP 104116 / JCM 14847 / LMG 12228 / 1C / PRS 101 / PAO1)).